The sequence spans 193 residues: Dual-action ribosomal maturation protein DarP (193 aa).

A compositionally biased stretch (basic and acidic residues) spans 1 to 10; sequence MRGRDEETGE. Disordered regions lie at residues 1–20 and 171–193; these read MRGR…SQQR and QEQG…EDDE. Acidic residues predominate over residues 178–193; it reads GDSELEDGESASEDDE.

Belongs to the DarP family.

It is found in the cytoplasm. Functionally, member of a network of 50S ribosomal subunit biogenesis factors which assembles along the 30S-50S interface, preventing incorrect 23S rRNA structures from forming. Promotes peptidyl transferase center (PTC) maturation. This chain is Dual-action ribosomal maturation protein DarP, found in Xanthomonas axonopodis pv. citri (strain 306).